Consider the following 155-residue polypeptide: Small ribosomal subunit protein uS15 (155 aa).

Residues 1–10 are compositionally biased toward basic residues; sequence MARMHTRRRG. A disordered region spans residues 1-66; that stretch reads MARMHTRRRG…EGVQGTPVPD (66 aa). The span at 21-33 shows a compositional bias: acidic residues; it reads EPPEWSDVDEDAI. Basic and acidic residues predominate over residues 34–45; the sequence is EERVVELAEQGH.

Belongs to the universal ribosomal protein uS15 family. Part of the 30S ribosomal subunit.

This Halobacterium salinarum (strain ATCC 700922 / JCM 11081 / NRC-1) (Halobacterium halobium) protein is Small ribosomal subunit protein uS15.